We begin with the raw amino-acid sequence, 345 residues long: Serpentine receptor class beta-13 (345 aa).

The Extracellular segment spans residues 1 to 22 (MAGINQTKCDLGFQITFNTVYR). N-linked (GlcNAc...) asparagine glycosylation is present at asparagine 5. A helical membrane pass occupies residues 23 to 43 (FSQFYTFSVSSFAVPGLIYFM). At 44-58 (FKRLFQLYFHGNLKT) the chain is on the cytoplasmic side. The helical transmembrane segment at 59–79 (LLIAYFISILLYAVMLCFAFG) threads the bilayer. At 80-103 (YQFFVPFFIKSNCDLIINKTLFKY) the chain is on the extracellular side. N-linked (GlcNAc...) asparagine glycosylation is present at asparagine 97. The chain crosses the membrane as a helical span at residues 104-124 (IHTSVIFLLTTPMMFPLGFSI). The Cytoplasmic portion of the chain corresponds to 125–142 (ERFTAMAMASRYENIRTL). The helical transmembrane segment at 143-163 (IGPVLVIFLIIPNCIIFYFLF) threads the bilayer. Topologically, residues 164 to 189 (QHETYDDTFISFLMLPNTTAVNFNTY) are extracellular. A glycan (N-linked (GlcNAc...) asparagine) is linked at asparagine 180. Residues 190-210 (LWFLLYLNIGNLALNVLLLLV) traverse the membrane as a helical segment. Over 211-241 (HRKFKRRLLLHKTSLSTRYAIEEISQSSKFT) the chain is Cytoplasmic. Residues 242 to 262 (LIITFTHLLFFGCNTICSILV) form a helical membrane-spanning segment. At 263-280 (RVLGEPFFGSFINHSVAR) the chain is on the extracellular side. N-linked (GlcNAc...) asparagine glycosylation occurs at asparagine 275. The chain crosses the membrane as a helical span at residues 281-301 (GVNCAVPTYNLVIVVVGFVSL). Residues 302–345 (SKLNSRRQQEVQTTVQLKTTGKEGARNYDNITANQWATITQIGF) are Cytoplasmic-facing.

Belongs to the nematode receptor-like protein srb family. As to expression, expressed in the head sensory neurons ASI, ASK and AWB. Not expressed in male somatic gonads or sperm.

It localises to the cell membrane. It is found in the perikaryon. The protein resides in the cell projection. The protein localises to the dendrite. G-protein coupled receptor that antagonizes the negative effects of the gcy-35 oxygen sensor on spermatogenesis. This leads to the maintenance of mitochondrial function in developing spermatocytes and/or spermatids prior to testis maturation during the early larval stages. Regulates the navigational capacity of sperm during hyperoxic conditions ensuring the proper targeting of sperm derived from males to the fertilization site in the uterus of hermaphrodites. May act in the same signaling pathway as the neuropeptide flp-21. In Caenorhabditis elegans, this protein is Serpentine receptor class beta-13.